A 727-amino-acid chain; its full sequence is Putative E3 ubiquitin-protein ligase UNKL (727 aa).

The disordered stretch occupies residues 1-21 (MPSVSKAAAAALSGSPPQTEK). C3H1-type zinc fingers lie at residues 75–104 (YSPD…HRTT), 115–145 (YYKT…HGPL), 243–277 (QYRS…HSRT), and 285–313 (IYKS…HTEK). Positions 330 to 339 (STSAYSSQPG) are enriched in polar residues. Disordered regions lie at residues 330–360 (STSA…DSKQ), 446–514 (LTGP…ATLG), and 543–562 (SPSP…SPNS). Low complexity predominate over residues 463-495 (SLPRSPSLHSSSSLSTSPLSSLSQSLSGPLVSS). The segment at 686–721 (CVACQERAHGTVLRPCQHRVLCEPCAASTPECPYCK) adopts an RING-type zinc-finger fold.

Belongs to the unkempt family. In terms of assembly, interacts with the GTP-bound form of Rac1. Interacts with Baf60b/Smarcd2. Ubiquitination is enhanced by activated Rac1. The presence of the RING finger domain is not essential for ubiquitination to occur. Ubiquitous.

The protein resides in the cytoplasm. The protein localises to the nucleus. It participates in protein modification; protein ubiquitination. Functionally, may participate in a protein complex showing an E3 ligase activity regulated by Rac1. Ubiquitination is directed towards itself and possibly other substrates, such as Baf60b/Smarcd2. Intrinsic E3 ligase activity has not been proven. This Mus musculus (Mouse) protein is Putative E3 ubiquitin-protein ligase UNKL (Unkl).